The following is a 487-amino-acid chain: Cytochrome P450 720B2 (487 aa).

Residues 14–34 form a helical membrane-spanning segment; sequence WLVGLLCLVLGFLLLQLYKLV. Cysteine 436 contributes to the heme binding site.

This sequence belongs to the cytochrome P450 family. Heme serves as cofactor.

It is found in the membrane. This chain is Cytochrome P450 720B2 (CYP720B2), found in Pinus taeda (Loblolly pine).